A 510-amino-acid polypeptide reads, in one-letter code: Photosystem II CP47 reaction center protein (510 aa).

Residues 2-16 lie on the Cytoplasmic side of the membrane; the sequence is GLPWYRVHTVLINDP. The helical transmembrane segment at 17 to 37 threads the bilayer; it reads GRLIAAHLMHTALVAGWAGSM. The Lumenal portion of the chain corresponds to 38–94; that stretch reads ALYELATFDPSDPVLNPMWRQGMFVLPFMARLGVTGSWSGWSITGETGIDPGFWSFE. A helical membrane pass occupies residues 95-116; that stretch reads GVALAHIVLSGLLFLAACWHWV. At 117–134 the chain is on the cytoplasmic side; the sequence is YWDLELFRDPRTGEPALD. A helical membrane pass occupies residues 135 to 157; the sequence is LPKMFGIHLFLAGLLCFGFGAFH. Over 158–196 the chain is Lumenal; sequence LTGLFGPGMWVSDPYGLTGSVQPVAPEWGPDGFNPYNPG. Residues 197–218 form a helical membrane-spanning segment; that stretch reads GVVAHHIAAGIVGIIAGLFHIL. The Cytoplasmic portion of the chain corresponds to 219-233; the sequence is VRPPQRLYKALRMGN. The helical transmembrane segment at 234–254 threads the bilayer; it reads IETVLSSSIAAVFFAAFVVAG. The Lumenal portion of the chain corresponds to 255-450; it reads TMWYGSATTP…GIFRTSPRGW (196 aa). The chain crosses the membrane as a helical span at residues 451-473; the sequence is FTFAHAVFALLFFFGHIWHGART. At 474–510 the chain is on the cytoplasmic side; sequence LFRDVFSGIDPELSPEQVEWGFYQKVGDVTTRRKEAV.

PSII is composed of 1 copy each of membrane proteins PsbA, PsbB, PsbC, PsbD, PsbE, PsbF, PsbH, PsbI, PsbJ, PsbK, PsbL, PsbM, PsbT, PsbX, PsbY, PsbZ, Psb30/Ycf12, peripheral proteins PsbO, CyanoQ (PsbQ), PsbU, PsbV and a large number of cofactors. It forms dimeric complexes. Part of a photosystem II (PSII) assembly intermediate complex PSII-I; crystallized from a strain deleted of psbJ, it forms monomeric PSII before addition of the oxygen evolving complex. PSII-I includes 3 assembly factors not found in mature PSII (Psb27, Psb28 and Psb34). The cofactor is Binds multiple chlorophylls. PSII binds additional chlorophylls, carotenoids and specific lipids..

The protein localises to the cellular thylakoid membrane. One of the components of the core complex of photosystem II (PSII). It binds chlorophyll and helps catalyze the primary light-induced photochemical processes of PSII. PSII is a light-driven water:plastoquinone oxidoreductase, using light energy to abstract electrons from H(2)O, generating O(2) and a proton gradient subsequently used for ATP formation. The polypeptide is Photosystem II CP47 reaction center protein (Thermosynechococcus vestitus (strain NIES-2133 / IAM M-273 / BP-1)).